Reading from the N-terminus, the 710-residue chain is Solute carrier organic anion transporter family member 3A1 (710 aa).

Methionine 1 carries the post-translational modification N-acetylmethionine. Residues 1 to 25 form a disordered region; the sequence is MQAKKPGGSSGGGRSGELQGDEAQR. Residues 1 to 40 lie on the Cytoplasmic side of the membrane; that stretch reads MQAKKPGGSSGGGRSGELQGDEAQRNKKKKKKVSCFSNIK. A helical membrane pass occupies residues 41–60; sequence IFLVSECALMLAQGTVGAYL. Residues 61–79 lie on the Extracellular side of the membrane; that stretch reads VSVLTTLERRFNLQSADVG. The chain crosses the membrane as a helical span at residues 80–100; that stretch reads VIASSFEIGNLALILFVSYFG. Over 101–106 the chain is Cytoplasmic; that stretch reads ARGHRP. Residues 107–131 form a helical membrane-spanning segment; that stretch reads RLIGCGGIVMALGALLSALPEFLTH. Residues 132–174 lie on the Extracellular side of the membrane; it reads QYKYEAGEIRWGAEGRDVCAANGSGGDQGPDPDLICRSRTATN. Asparagine 153 carries an N-linked (GlcNAc...) asparagine glycan. The chain crosses the membrane as a helical span at residues 175–203; the sequence is MMYLLLIGAQVLLGIGATPVQPLGVSYID. Residues 204 to 222 lie on the Cytoplasmic side of the membrane; sequence DHVRRKDSSLYIGILFTML. Residues 223–243 form a helical membrane-spanning segment; sequence VFGPACGFILGSFCTKIYVDA. Over 244–261 the chain is Extracellular; sequence VFIDTSNLDITPDDPRWI. A helical transmembrane segment spans residues 262 to 286; the sequence is GAWWGGFLLCGALLFFSSVLMFGFP. At 287 to 344 the chain is on the cytoplasmic side; it reads QSLPPHSDPALESEQAMLPEREYERPKPSNGVLRHPLEPDSSASCFQQLRVIPKVTKH. The helical transmembrane segment at 345–366 threads the bilayer; that stretch reads LLSNPVFTCIILAACMEIAVVA. The Extracellular segment spans residues 367–386; the sequence is GFAAFLGKYLEQQFNLTTSS. A glycan (N-linked (GlcNAc...) asparagine) is linked at asparagine 381. Residues 387–410 traverse the membrane as a helical segment; sequence ANQLLGMTAIPCACLGIFLGGLLV. At 411–414 the chain is on the cytoplasmic side; sequence KKLS. The chain crosses the membrane as a helical span at residues 415–438; the sequence is LSALGAIRMAMLVNLVSTACYVSF. Residues 439–539 lie on the Extracellular side of the membrane; that stretch reads LFLGCDTGPV…PGCQEAFLTF (101 aa). An N-linked (GlcNAc...) asparagine glycan is attached at asparagine 457. The Kazal-like domain occupies 465–513; it reads LDPYSSCNKNCECQTDSFTPVCGADGITYLSACFAGCNSTNLTGCACLM. 3 disulfide bridges follow: cysteine 471–cysteine 501, cysteine 477–cysteine 497, and cysteine 486–cysteine 511. Asparagine 502, asparagine 505, and asparagine 519 each carry an N-linked (GlcNAc...) asparagine glycan. A helical membrane pass occupies residues 540 to 562; that stretch reads LCVMCVCSMIGAMAQTPSVIILI. Residues 563–571 are Cytoplasmic-facing; it reads RTVSPELKS. Residues 572-597 form a helical membrane-spanning segment; it reads YALGVLFLLLRLLGFIPPPLIFGAGI. The Extracellular portion of the chain corresponds to 598-630; it reads DSTCLFWSTFCGEQGACALYDNVAYRYLYVSIA. A helical membrane pass occupies residues 631–648; it reads IALKSFAFLLYTTTWQCL. The Cytoplasmic segment spans residues 649 to 705; that stretch reads RKNYKRYIKNHEGGLSTSEFFASTLTLDNLGRDPVPANQTHRTKFIYNLEDHEWCEN.

This sequence belongs to the organo anion transporter (TC 2.A.60) family.

Its subcellular location is the basolateral cell membrane. The protein resides in the apical cell membrane. It localises to the basal cell membrane. It carries out the reaction L-thyroxine(out) = L-thyroxine(in). The enzyme catalyses prostaglandin E1(out) = prostaglandin E1(in). The catalysed reaction is prostaglandin E2(out) = prostaglandin E2(in). It catalyses the reaction prostaglandin F2alpha(out) = prostaglandin F2alpha(in). It carries out the reaction (5Z,8Z,11Z,14Z)-eicosatetraenoate(out) = (5Z,8Z,11Z,14Z)-eicosatetraenoate(in). The enzyme catalyses taurocholate(out) = taurocholate(in). The catalysed reaction is glycocholate(out) = glycocholate(in). It catalyses the reaction estrone 3-sulfate(out) = estrone 3-sulfate(in). It carries out the reaction argipressin(out) = argipressin(in). Its function is as follows. Putative organic anion antiporter with apparent broad substrate specificity. Recognizes various substrates including thyroid hormone L-thyroxine, prostanoids such as prostaglandin E1 and E2, bile acids such as taurocholate, glycolate and glycochenodeoxycholate and peptide hormones such as L-arginine vasopressin, likely operating in a tissue-specific manner. The transport mechanism, its electrogenicity and potential tissue-specific counterions remain to be elucidated. The chain is Solute carrier organic anion transporter family member 3A1 (SLCO3A1) from Bos taurus (Bovine).